We begin with the raw amino-acid sequence, 584 residues long: Actin-binding protein IPP (584 aa).

Residues 37–104 form the BTB domain; it reads CDVQLQVGKE…IYTGVVNIAV (68 aa). Kelch repeat units follow at residues 296 to 343, 344 to 390, 391 to 437, 439 to 485, 487 to 533, and 535 to 583; these read YTRL…VVGG, MVYA…VCYG, AIYA…EMQG, IYAV…ALND, IYAI…TVNG, and LYVS…GVAV.

In terms of tissue distribution, expression seems confined to tissues derived from trophectoderm and primitive endoderm.

The protein localises to the cytoplasm. It is found in the cytoskeleton. Functionally, may play a role in organizing the actin cytoskeleton. The chain is Actin-binding protein IPP (Ipp) from Mus musculus (Mouse).